The following is a 585-amino-acid chain: Chaperonin CPN60-like 1, mitochondrial (585 aa).

Residues 1–32 constitute a mitochondrion transit peptide; it reads MYRLVSNVASKARIARKCTSQIGSRLNSTRNY.

Belongs to the chaperonin (HSP60) family.

The protein localises to the mitochondrion. Implicated in mitochondrial protein import and macromolecular assembly. May facilitate the correct folding of imported proteins. May also prevent misfolding and promote the refolding and proper assembly of unfolded polypeptides generated under stress conditions in the mitochondrial matrix. This is Chaperonin CPN60-like 1, mitochondrial from Arabidopsis thaliana (Mouse-ear cress).